Here is a 113-residue protein sequence, read N- to C-terminus: Photosystem II reaction center Psb28 protein (113 aa).

This sequence belongs to the Psb28 family. In terms of assembly, part of the photosystem II complex.

The protein localises to the cellular thylakoid membrane. The polypeptide is Photosystem II reaction center Psb28 protein (Prochlorococcus marinus (strain NATL2A)).